The chain runs to 310 residues: MTNFEKIIAQNRLKTNAVLTTYCAIFAFIGLLVDAIRINANDLGIALFKLMTFQIFPTITIVMFVVAFVIILVCIQNFSSIMLSGDEYKLIDPSKVLSSKENQIHRLLLELLEEAKLHFEPKLYIINAPYMNAFASGWDESNSLIALTSALIERLDRDELKAVIAHELSHIRHNDIRLTMCVGILSNIMLLVANFSVYFFMGNRKNSGANLARMILWVLQIILPFLTLLLQMYLSRTREYMADSGAAFLMHDNKPMIRALQKISNDYTNNDYKEIDKNSTRSAAYLFNAEMFSTHPSIKNRIQSLRKRVI.

2 helical membrane passes run Asn-16–Ile-36 and Ile-55–Ile-75. Residue His-166 participates in Zn(2+) binding. The active site involves Glu-167. His-170 provides a ligand contact to Zn(2+). 2 helical membrane-spanning segments follow: residues Val-182–Gly-202 and Met-214–Leu-234. Glu-239 is a Zn(2+) binding site.

It belongs to the peptidase M48B family. Zn(2+) is required as a cofactor.

Its subcellular location is the cell inner membrane. In Helicobacter pylori (strain J99 / ATCC 700824) (Campylobacter pylori J99), this protein is Protease HtpX homolog.